Here is a 149-residue protein sequence, read N- to C-terminus: Large ribosomal subunit protein uL30 (149 aa).

This sequence belongs to the universal ribosomal protein uL30 family. Part of the 50S ribosomal subunit.

This chain is Large ribosomal subunit protein uL30, found in Methanopyrus kandleri (strain AV19 / DSM 6324 / JCM 9639 / NBRC 100938).